The primary structure comprises 428 residues: Histidine--tRNA ligase (428 aa).

This sequence belongs to the class-II aminoacyl-tRNA synthetase family. Homodimer.

The protein localises to the cytoplasm. It carries out the reaction tRNA(His) + L-histidine + ATP = L-histidyl-tRNA(His) + AMP + diphosphate + H(+). This is Histidine--tRNA ligase (hisS) from Chlamydia muridarum (strain MoPn / Nigg).